The following is a 371-amino-acid chain: S-adenosylmethionine:tRNA ribosyltransferase-isomerase (371 aa).

It belongs to the QueA family. Monomer.

The protein resides in the cytoplasm. The enzyme catalyses 7-aminomethyl-7-carbaguanosine(34) in tRNA + S-adenosyl-L-methionine = epoxyqueuosine(34) in tRNA + adenine + L-methionine + 2 H(+). It functions in the pathway tRNA modification; tRNA-queuosine biosynthesis. Its function is as follows. Transfers and isomerizes the ribose moiety from AdoMet to the 7-aminomethyl group of 7-deazaguanine (preQ1-tRNA) to give epoxyqueuosine (oQ-tRNA). The sequence is that of S-adenosylmethionine:tRNA ribosyltransferase-isomerase from Prochlorococcus marinus (strain MIT 9303).